The primary structure comprises 326 residues: Pyruvate dehydrogenase E1 component subunit beta (326 aa).

Residue E62 participates in thiamine diphosphate binding.

Heterodimer of an alpha and a beta chain. Thiamine diphosphate serves as cofactor.

The catalysed reaction is N(6)-[(R)-lipoyl]-L-lysyl-[protein] + pyruvate + H(+) = N(6)-[(R)-S(8)-acetyldihydrolipoyl]-L-lysyl-[protein] + CO2. In terms of biological role, the pyruvate dehydrogenase complex catalyzes the overall conversion of pyruvate to acetyl-CoA and CO(2). It contains multiple copies of three enzymatic components: pyruvate dehydrogenase (E1), dihydrolipoamide acetyltransferase (E2) and lipoamide dehydrogenase (E3). This chain is Pyruvate dehydrogenase E1 component subunit beta (pdhB), found in Mycoplasma genitalium (strain ATCC 33530 / DSM 19775 / NCTC 10195 / G37) (Mycoplasmoides genitalium).